A 424-amino-acid polypeptide reads, in one-letter code: Spore coat protein SP60 (424 aa).

The N-terminal stretch at 1-23 is a signal peptide; sequence MKILSLLVVGALCMGGKVYGEVN. 6 Follistatin-like domains span residues 52–74, 85–109, 117–139, 184–206, 215–234, and 299–322; these read DCST…RQCV, KCDN…ALCV, VCRT…ECCV, ICRL…ECCV, DLKC…SKCC, and RCDD…LSCE. The segment at 330–424 is disordered; that stretch reads RSLDWAENEN…FQDANDEWDY (95 aa). Acidic residues-rich tracts occupy residues 335-357 and 365-424; these read AENE…YDGD and YDGD…EWDY.

The chain is Spore coat protein SP60 (cotC) from Dictyostelium discoideum (Social amoeba).